Consider the following 450-residue polypeptide: Bifunctional protein GlmU (450 aa).

A pyrophosphorylase region spans residues 1–226 (MLAVAVLAAG…ADEVNGINNR (226 aa)). UDP-N-acetyl-alpha-D-glucosamine contacts are provided by residues 7 to 10 (LAAG), lysine 21, glutamine 73, and 78 to 79 (GT). Aspartate 103 provides a ligand contact to Mg(2+). Residues glycine 140, glutamate 155, asparagine 170, and asparagine 224 each contribute to the UDP-N-acetyl-alpha-D-glucosamine site. Asparagine 224 contributes to the Mg(2+) binding site. The linker stretch occupies residues 227-247 (RQLAQCEALLQQRLRHHWMDE). Residues 248 to 450 (GVTFIDPESC…TKEGWAERKV (203 aa)) form an N-acetyltransferase region. UDP-N-acetyl-alpha-D-glucosamine contacts are provided by arginine 329 and lysine 347. Histidine 359 (proton acceptor) is an active-site residue. Positions 362 and 373 each coordinate UDP-N-acetyl-alpha-D-glucosamine. Acetyl-CoA-binding positions include alanine 376, 382–383 (NY), alanine 419, and arginine 436.

This sequence in the N-terminal section; belongs to the N-acetylglucosamine-1-phosphate uridyltransferase family. It in the C-terminal section; belongs to the transferase hexapeptide repeat family. In terms of assembly, homotrimer. It depends on Mg(2+) as a cofactor.

It is found in the cytoplasm. The enzyme catalyses alpha-D-glucosamine 1-phosphate + acetyl-CoA = N-acetyl-alpha-D-glucosamine 1-phosphate + CoA + H(+). The catalysed reaction is N-acetyl-alpha-D-glucosamine 1-phosphate + UTP + H(+) = UDP-N-acetyl-alpha-D-glucosamine + diphosphate. Its pathway is nucleotide-sugar biosynthesis; UDP-N-acetyl-alpha-D-glucosamine biosynthesis; N-acetyl-alpha-D-glucosamine 1-phosphate from alpha-D-glucosamine 6-phosphate (route II): step 2/2. It functions in the pathway nucleotide-sugar biosynthesis; UDP-N-acetyl-alpha-D-glucosamine biosynthesis; UDP-N-acetyl-alpha-D-glucosamine from N-acetyl-alpha-D-glucosamine 1-phosphate: step 1/1. It participates in bacterial outer membrane biogenesis; LPS lipid A biosynthesis. Catalyzes the last two sequential reactions in the de novo biosynthetic pathway for UDP-N-acetylglucosamine (UDP-GlcNAc). The C-terminal domain catalyzes the transfer of acetyl group from acetyl coenzyme A to glucosamine-1-phosphate (GlcN-1-P) to produce N-acetylglucosamine-1-phosphate (GlcNAc-1-P), which is converted into UDP-GlcNAc by the transfer of uridine 5-monophosphate (from uridine 5-triphosphate), a reaction catalyzed by the N-terminal domain. The sequence is that of Bifunctional protein GlmU from Synechococcus sp. (strain CC9605).